The sequence spans 188 residues: UPF0398 protein BBR47_29830 (188 aa).

It belongs to the UPF0398 family.

This is UPF0398 protein BBR47_29830 from Brevibacillus brevis (strain 47 / JCM 6285 / NBRC 100599).